We begin with the raw amino-acid sequence, 203 residues long: Putative B3 domain-containing protein At1g50220 (203 aa).

A DNA-binding region (TF-B3) is located at residues 99 to 195; sequence DIVGNVALPK…KFIVLNFQHK (97 aa).

It is found in the nucleus. In Arabidopsis thaliana (Mouse-ear cress), this protein is Putative B3 domain-containing protein At1g50220.